The following is a 157-amino-acid chain: 3-dehydroquinate dehydratase (157 aa).

Residue Tyr-24 is the Proton acceptor of the active site. Substrate contacts are provided by Asn-75, His-81, and Asp-88. His-101 serves as the catalytic Proton donor. Substrate is bound by residues 102–103 (LS) and Arg-112.

It belongs to the type-II 3-dehydroquinase family. In terms of assembly, homododecamer.

The enzyme catalyses 3-dehydroquinate = 3-dehydroshikimate + H2O. It participates in metabolic intermediate biosynthesis; chorismate biosynthesis; chorismate from D-erythrose 4-phosphate and phosphoenolpyruvate: step 3/7. Its function is as follows. Catalyzes a trans-dehydration via an enolate intermediate. This is 3-dehydroquinate dehydratase from Brucella melitensis biotype 1 (strain ATCC 23456 / CCUG 17765 / NCTC 10094 / 16M).